Consider the following 106-residue polypeptide: MVNIPKTRNTYCKGKGCRKHTIHKVTQYKSGRASLFAQGKRRYDRKQSGYGGQTKQVFHKKAKTTKKIVLKLECTVCKTKKQLPLKRCKHIELGGEKKQKGQALQF.

The protein belongs to the eukaryotic ribosomal protein eL42 family.

This is Large ribosomal subunit protein eL42Q (RIM-C) from Candida maltosa (Yeast).